Reading from the N-terminus, the 234-residue chain is 2-C-methyl-D-erythritol 4-phosphate cytidylyltransferase (234 aa).

Belongs to the IspD/TarI cytidylyltransferase family. IspD subfamily.

It catalyses the reaction 2-C-methyl-D-erythritol 4-phosphate + CTP + H(+) = 4-CDP-2-C-methyl-D-erythritol + diphosphate. It functions in the pathway isoprenoid biosynthesis; isopentenyl diphosphate biosynthesis via DXP pathway; isopentenyl diphosphate from 1-deoxy-D-xylulose 5-phosphate: step 2/6. Functionally, catalyzes the formation of 4-diphosphocytidyl-2-C-methyl-D-erythritol from CTP and 2-C-methyl-D-erythritol 4-phosphate (MEP). The protein is 2-C-methyl-D-erythritol 4-phosphate cytidylyltransferase of Shewanella sediminis (strain HAW-EB3).